A 267-amino-acid polypeptide reads, in one-letter code: Placental prolactin-related protein 2 (267 aa).

2 N-linked (GlcNAc...) asparagine glycosylation sites follow: asparagine 99 and asparagine 121. Cystine bridges form between cysteine 126/cysteine 244 and cysteine 261/cysteine 267.

Belongs to the somatotropin/prolactin family.

The protein resides in the secreted. Functionally, placental prolactin-related proteins may play a specific role during gestation. The chain is Placental prolactin-related protein 2 (PRP2) from Bos taurus (Bovine).